The following is a 422-amino-acid chain: UDP-N-acetylglucosamine 1-carboxyvinyltransferase (422 aa).

A phosphoenolpyruvate-binding site is contributed by 22–23 (KN). R93 serves as a coordination point for UDP-N-acetyl-alpha-D-glucosamine. Residue C117 is the Proton donor of the active site. C117 is subject to 2-(S-cysteinyl)pyruvic acid O-phosphothioketal. UDP-N-acetyl-alpha-D-glucosamine contacts are provided by residues 122–126 (RPVDQ), D305, and I327.

The protein belongs to the EPSP synthase family. MurA subfamily.

The protein resides in the cytoplasm. It catalyses the reaction phosphoenolpyruvate + UDP-N-acetyl-alpha-D-glucosamine = UDP-N-acetyl-3-O-(1-carboxyvinyl)-alpha-D-glucosamine + phosphate. Its pathway is cell wall biogenesis; peptidoglycan biosynthesis. In terms of biological role, cell wall formation. Adds enolpyruvyl to UDP-N-acetylglucosamine. The chain is UDP-N-acetylglucosamine 1-carboxyvinyltransferase from Bordetella parapertussis (strain 12822 / ATCC BAA-587 / NCTC 13253).